Reading from the N-terminus, the 89-residue chain is Small ribosomal subunit protein uS14A (89 aa).

This sequence belongs to the universal ribosomal protein uS14 family. Part of the 30S ribosomal subunit. Contacts proteins S3 and S10.

Functionally, binds 16S rRNA, required for the assembly of 30S particles and may also be responsible for determining the conformation of the 16S rRNA at the A site. In Limosilactobacillus reuteri (strain DSM 20016) (Lactobacillus reuteri), this protein is Small ribosomal subunit protein uS14A.